We begin with the raw amino-acid sequence, 135 residues long: C-type lectin PAL (135 aa).

4 disulfide bridges follow: cysteine 3/cysteine 14, cysteine 31/cysteine 131, cysteine 38/cysteine 133, and cysteine 106/cysteine 123. In terms of domain architecture, C-type lectin spans 10–132 (MNGLCYKIFD…CGSKNAFLCQ (123 aa)). The Ca(2+) site is built by glutamine 96, aspartate 98, glutamate 104, asparagine 119, and aspartate 120. The Galactose-binding signature appears at 96-98 (QPD).

It belongs to the true venom lectin family. In terms of assembly, homodimer; disulfide-linked. Expressed by the venom gland.

The protein resides in the secreted. In terms of biological role, galactose-binding lectin which recognizes specific carbohydrate structures and agglutinates a variety of animal cells by binding to cell-surface glycoproteins and glycolipids. This is a calcium-dependent lectin. Shows high hemagglutinating activity (MHC is 0.25 ug/ml on rabbit erythrocytes). The sequence is that of C-type lectin PAL from Bitis arietans (African puff adder).